A 397-amino-acid chain; its full sequence is Iripin-2 (397 aa).

The N-terminal stretch at 1-21 (MEDFKMKTLAAFLSLLVLCWA) is a signal peptide. 2 N-linked (GlcNAc...) asparagine glycosylation sites follow: Asn-109 and Asn-270.

Belongs to the serpin family. As to quaternary structure, interacts with mouse MCPT4. Female salivary gland. Ovary. Midgut.

The protein resides in the secreted. Serine protease inhibitor that modulates blood feeding of ticks on vertebrate species. Inhibits host trypsin, thrombin (F2), alpha-chymotrypsin, cathepsin G (CTSG) and mast cell chymase (CMA1). Inhibits host cathepsin G- and thrombin-induced platelet aggregation. Inhibits acute inflammation in the host. Suppresses neutrophil recruitment in inflamed area. Does not inhibit host plasmin (PLG), factor Xa (F10), factor XIa (F11), elastase and proteinase 3/myeloblastin (PRTN3). Functionally, (Microbial infection) Inhibits IL6 production by mouse splenic dendritic cells in response to Borrelia burgdorferi exposure. Decreases levels of STAT3 phosphorylation in mouse splenic dendritic cells in response to Borrelia burgdorferi exposure and in Borrelia-primed CD4+ T-lymphocytes. Inhibits differentiation of mouse Th17 cells, a subset of CD4+ T-lymphocytes that play a crucial role in protection against extracellular bacteria, in response to Borrelia burgdorferi exposure via inhibition of the IL6/STAT3 signaling pathway. The protein is Iripin-2 of Ixodes ricinus (Common tick).